The primary structure comprises 100 residues: Large ribosomal subunit protein mL53 (100 aa).

Belongs to the mitochondrion-specific ribosomal protein mL53 family. Component of the mitochondrial large ribosomal subunit (mt-LSU). Mature yeast 74S mitochondrial ribosomes consist of a small (37S) and a large (54S) subunit. The 37S small subunit contains a 15S ribosomal RNA (15S mt-rRNA) and at least 32 different proteins. The 54S large subunit contains a 21S rRNA (21S mt-rRNA) and at least 45 different proteins.

Its subcellular location is the mitochondrion. In terms of biological role, component of the mitochondrial ribosome (mitoribosome), a dedicated translation machinery responsible for the synthesis of mitochondrial genome-encoded proteins, including at least some of the essential transmembrane subunits of the mitochondrial respiratory chain. The mitoribosomes are attached to the mitochondrial inner membrane and translation products are cotranslationally integrated into the membrane. The protein is Large ribosomal subunit protein mL53 (mrpl44) of Schizosaccharomyces pombe (strain 972 / ATCC 24843) (Fission yeast).